The sequence spans 118 residues: Large ribosomal subunit protein uL18 (118 aa).

Belongs to the universal ribosomal protein uL18 family. In terms of assembly, part of the 50S ribosomal subunit; part of the 5S rRNA/L5/L18/L25 subcomplex. Contacts the 5S and 23S rRNAs.

In terms of biological role, this is one of the proteins that bind and probably mediate the attachment of the 5S RNA into the large ribosomal subunit, where it forms part of the central protuberance. This Campylobacter hominis (strain ATCC BAA-381 / DSM 21671 / CCUG 45161 / LMG 19568 / NCTC 13146 / CH001A) protein is Large ribosomal subunit protein uL18.